Here is a 161-residue protein sequence, read N- to C-terminus: 3-hydroxyacyl-[acyl-carrier-protein] dehydratase FabZ (161 aa).

Histidine 64 is a catalytic residue.

It belongs to the thioester dehydratase family. FabZ subfamily.

Its subcellular location is the cytoplasm. The catalysed reaction is a (3R)-hydroxyacyl-[ACP] = a (2E)-enoyl-[ACP] + H2O. In terms of biological role, involved in unsaturated fatty acids biosynthesis. Catalyzes the dehydration of short chain beta-hydroxyacyl-ACPs and long chain saturated and unsaturated beta-hydroxyacyl-ACPs. The protein is 3-hydroxyacyl-[acyl-carrier-protein] dehydratase FabZ of Paramagnetospirillum magneticum (strain ATCC 700264 / AMB-1) (Magnetospirillum magneticum).